The primary structure comprises 169 residues: Actin-related protein 2/3 complex subunit 4 (169 aa).

This sequence belongs to the ARPC4 family. Component of the Arp2/3 complex composed of arpB/Arp2, arpC/Arp3, arcA/p41-arc, arcB/p34-arc, arcC/p21-arc, arcD/p20-arc and arcE/p16-arc. Interacts with carmil (via the region between the LRR domain and COOH-terminal proline-rich domain); carmil is required for Arp2/3-dependent actin nucleation. Arp2/3 complex, MyoB, MyoC, and the alpha and beta subunits of capping protein all form a larger complex with carmil.

It is found in the cytoplasm. It localises to the cytoskeleton. The protein resides in the cytosol. The protein localises to the cell cortex. Its subcellular location is the cell projection. It is found in the pseudopodium. Functionally, functions as a component of the Arp2/3 complex which is involved in regulation of actin polymerization and together with an activating nucleation-promoting factor (NPF) mediates the formation of branched actin networks. Seems to contact the pointed end of the daughter actin filament. The Arp2/3 complex is involved in organizing the actin system in cell motility and chemotaxis, in phagocytosis and macropinocytosis, at late steps of endosome processing, and in mitosis. In concert with a group of other proteins, the Arp2/3 complex plays a general role in the rapid activation and adaptation of the actin system to its multiple functions. The protein is Actin-related protein 2/3 complex subunit 4 (arcD) of Dictyostelium discoideum (Social amoeba).